Reading from the N-terminus, the 250-residue chain is Small ribosomal subunit protein uS3 (250 aa).

The KH type-2 domain occupies 39 to 107 (VREFLTKNLK…PAQVSINEID (69 aa)). The tract at residues 215-250 (MNPAPAEERPAKRGRGRGEGQERRGRRGDRAADKGE) is disordered. Over residues 220-250 (AEERPAKRGRGRGEGQERRGRRGDRAADKGE) the composition is skewed to basic and acidic residues.

The protein belongs to the universal ribosomal protein uS3 family. In terms of assembly, part of the 30S ribosomal subunit. Forms a tight complex with proteins S10 and S14.

Its function is as follows. Binds the lower part of the 30S subunit head. Binds mRNA in the 70S ribosome, positioning it for translation. In Acinetobacter baumannii (strain AB0057), this protein is Small ribosomal subunit protein uS3.